Reading from the N-terminus, the 354-residue chain is Peptide chain release factor 1 (354 aa).

Glutamine 231 carries the N5-methylglutamine modification.

Belongs to the prokaryotic/mitochondrial release factor family. Post-translationally, methylated by PrmC. Methylation increases the termination efficiency of RF1.

The protein resides in the cytoplasm. In terms of biological role, peptide chain release factor 1 directs the termination of translation in response to the peptide chain termination codons UAG and UAA. The protein is Peptide chain release factor 1 of Acholeplasma laidlawii (strain PG-8A).